The sequence spans 416 residues: Multifunctional CCA protein (416 aa).

Positions 8 and 11 each coordinate ATP. Residues Gly8 and Arg11 each coordinate CTP. Asp21 and Asp23 together coordinate Mg(2+). Residues Arg91, Arg137, and Arg140 each contribute to the ATP site. Positions 91, 137, and 140 each coordinate CTP. In terms of domain architecture, HD spans 226 to 327; the sequence is TGVHIMLVID…VNLLERCDAF (102 aa).

It belongs to the tRNA nucleotidyltransferase/poly(A) polymerase family. Bacterial CCA-adding enzyme type 1 subfamily. In terms of assembly, monomer. Can also form homodimers and oligomers. The cofactor is Mg(2+). Ni(2+) serves as cofactor.

The catalysed reaction is a tRNA precursor + 2 CTP + ATP = a tRNA with a 3' CCA end + 3 diphosphate. It catalyses the reaction a tRNA with a 3' CCA end + 2 CTP + ATP = a tRNA with a 3' CCACCA end + 3 diphosphate. In terms of biological role, catalyzes the addition and repair of the essential 3'-terminal CCA sequence in tRNAs without using a nucleic acid template. Adds these three nucleotides in the order of C, C, and A to the tRNA nucleotide-73, using CTP and ATP as substrates and producing inorganic pyrophosphate. tRNA 3'-terminal CCA addition is required both for tRNA processing and repair. Also involved in tRNA surveillance by mediating tandem CCA addition to generate a CCACCA at the 3' terminus of unstable tRNAs. While stable tRNAs receive only 3'-terminal CCA, unstable tRNAs are marked with CCACCA and rapidly degraded. This chain is Multifunctional CCA protein, found in Janthinobacterium sp. (strain Marseille) (Minibacterium massiliensis).